Reading from the N-terminus, the 341-residue chain is THO complex subunit 6 (341 aa).

WD repeat units follow at residues 22–61 (RLHM…SSEA), 74–112 (AHDG…GCKE), 124–165 (LEVP…RVLR), 166–205 (GHTD…EVQT), 215–254 (SRPH…PTTI), 256–293 (PIRA…KAQV), and 295–339 (GSSP…AFSL). S180 is modified (phosphoserine).

It belongs to the WD repeat THOC6 family. In terms of assembly, component of the THO subcomplex, which is composed of THOC1, THOC2, THOC3, THOC5, THOC6 and THOC7. The THO subcomplex interacts with DDX39B to form the THO-DDX39B complex which multimerizes into a 28-subunit tetrameric assembly. Component of the transcription/export (TREX) complex at least composed of ALYREF/THOC4, DDX39B, SARNP/CIP29, CHTOP and the THO subcomplex; in the complex interacts with THOC5; together with THOC5 and THOC7, plays a key structural role in the oligomerization of the THO-DDX39B complex. TREX seems to have a dynamic structure involving ATP-dependent remodeling.

The protein localises to the nucleus. It is found in the nucleus speckle. Functionally, component of the THO subcomplex of the TREX complex which is thought to couple mRNA transcription, processing and nuclear export, and which specifically associates with spliced mRNA and not with unspliced pre-mRNA. Plays a key structural role in the oligomerization of the THO-DDX39B complex. TREX is recruited to spliced mRNAs by a transcription-independent mechanism, binds to mRNA upstream of the exon-junction complex (EJC) and is recruited in a splicing- and cap-dependent manner to a region near the 5' end of the mRNA where it functions in mRNA export to the cytoplasm via the TAP/NXF1 pathway. Plays a role in apoptosis negative control involved in brain development. Its function is as follows. (Microbial infection) The TREX complex is essential for the export of Kaposi's sarcoma-associated herpesvirus (KSHV) intronless mRNAs and infectious virus production. The polypeptide is THO complex subunit 6 (THOC6) (Homo sapiens (Human)).